Consider the following 103-residue polypeptide: Hexon-interlacing protein (103 aa).

Residues Leu72–Arg99 are a coiled coil.

Belongs to the adenoviridae hexon-interlacing protein family. As to quaternary structure, homotrimer. Interacts with hexon protein; this interaction tethers the hexons together. Self-interacts with adjacent proteins. Interacts with kinesin light chain KLC1; this interaction leads to capsid disruption at the nuclear pore complex during virus entry into host cell.

It localises to the virion. It is found in the host nucleus. Structural component of the virion that acts as a cement protein on the capsid exterior and forms triskelion structures consisting of three molecules that stabilize three hexon trimers at the center of each icosahedral facet and fixes the peripentonal hexons. Dispensable for assembly. During virus entry, recruits the anterograde motor kinesin-1 to the capsid docked at the nuclear pore complex thereby subjecting the docked capsid to a pulling force. The resulting tension leads to capsid disruption, dispersion of capsid fragments toward cell periphery and eventually viral DNA entry into the host nucleus. This is Hexon-interlacing protein from Canis lupus familiaris (Dog).